The chain runs to 299 residues: 4-diphosphocytidyl-2-C-methyl-D-erythritol kinase (299 aa).

Residue Lys18 is part of the active site. Position 104 to 114 (104 to 114 (PIASGIGGGSS)) interacts with ATP. Asp146 is an active-site residue.

It belongs to the GHMP kinase family. IspE subfamily.

It catalyses the reaction 4-CDP-2-C-methyl-D-erythritol + ATP = 4-CDP-2-C-methyl-D-erythritol 2-phosphate + ADP + H(+). It functions in the pathway isoprenoid biosynthesis; isopentenyl diphosphate biosynthesis via DXP pathway; isopentenyl diphosphate from 1-deoxy-D-xylulose 5-phosphate: step 3/6. Functionally, catalyzes the phosphorylation of the position 2 hydroxy group of 4-diphosphocytidyl-2C-methyl-D-erythritol. The sequence is that of 4-diphosphocytidyl-2-C-methyl-D-erythritol kinase from Brucella abortus biovar 1 (strain 9-941).